Consider the following 286-residue polypeptide: Shikimate dehydrogenase (NADP(+)) (286 aa).

Residues 19–21 (SVS) and Thr-66 contribute to the shikimate site. Lys-70 acts as the Proton acceptor in catalysis. Residues Asn-91 and Asp-106 each contribute to the shikimate site. NADP(+)-binding positions include 130 to 134 (GAGGS) and Ala-225. Shikimate is bound at residue Tyr-227. Position 248 (Gly-248) interacts with NADP(+).

Belongs to the shikimate dehydrogenase family. Homodimer.

It catalyses the reaction shikimate + NADP(+) = 3-dehydroshikimate + NADPH + H(+). It functions in the pathway metabolic intermediate biosynthesis; chorismate biosynthesis; chorismate from D-erythrose 4-phosphate and phosphoenolpyruvate: step 4/7. In terms of biological role, involved in the biosynthesis of the chorismate, which leads to the biosynthesis of aromatic amino acids. Catalyzes the reversible NADPH linked reduction of 3-dehydroshikimate (DHSA) to yield shikimate (SA). This is Shikimate dehydrogenase (NADP(+)) from Dehalococcoides mccartyi (strain CBDB1).